Here is a 1799-residue protein sequence, read N- to C-terminus: 1,3-beta-glucan synthase component FKS1 (1799 aa).

Pro residues predominate over residues 1 to 11 (MSYPNPPPPPK). The segment at 1 to 136 (MSYPNPPPPP…SNAGHRPRDP (136 aa)) is disordered. The span at 12-23 (GSASFSSSSSDP) shows a compositional bias: low complexity. The span at 51 to 64 (GAGGAGVAPPGQGG) shows a compositional bias: gly residues. The segment covering 91-101 (ASESGWSQNEP) has biased composition (polar residues). The next 16 membrane-spanning stretches (helical) occupy residues 431–451 (IWVL…PSIY), 470–490 (LGGF…FSYI), 504–524 (LIFL…IAFF), 530–550 (VALI…IAFA), 591–611 (FLLW…FLTL), 648–668 (VMFV…YVIW), 1268–1288 (NILV…LGTL), 1323–1343 (CIIS…VQEL), 1422–1442 (LVLL…YFWI), 1446–1466 (GLCV…DFII), 1527–1547 (IGEI…YLFI), 1563–1583 (IAII…TLFL), 1605–1625 (ALAH…LWFL), 1635–1655 (LGII…IAVF), 1704–1724 (DFIA…IPYF), and 1762–1782 (GLLY…PIIF).

This sequence belongs to the glycosyltransferase 48 family. As to quaternary structure, component of the 1,3-beta-glucan synthase (GS) complex composed of a catalytic subunit FKS1 and a regulatory subunit RHO1.

It localises to the cell membrane. It catalyses the reaction [(1-&gt;3)-beta-D-glucosyl](n) + UDP-alpha-D-glucose = [(1-&gt;3)-beta-D-glucosyl](n+1) + UDP + H(+). With respect to regulation, activated by magnesium ions. Inhibited by caspofungin and cilofungin. In terms of biological role, catalytic subunit of the 1,3-beta-glucan synthase (GS) complex. Synthesizes 1,3-beta-glucan, a major structural component of the yeast cell wall. Involved in cell wall synthesis, maintenance and remodeling. This Cryptococcus neoformans var. grubii serotype A (strain H99 / ATCC 208821 / CBS 10515 / FGSC 9487) (Filobasidiella neoformans var. grubii) protein is 1,3-beta-glucan synthase component FKS1.